The chain runs to 434 residues: ATP-dependent protease ATPase subunit HslU (434 aa).

Residues I18, 60 to 65 (GVGKTE), D247, E312, and R384 each bind ATP.

This sequence belongs to the ClpX chaperone family. HslU subfamily. A double ring-shaped homohexamer of HslV is capped on each side by a ring-shaped HslU homohexamer. The assembly of the HslU/HslV complex is dependent on binding of ATP.

It localises to the cytoplasm. In terms of biological role, ATPase subunit of a proteasome-like degradation complex; this subunit has chaperone activity. The binding of ATP and its subsequent hydrolysis by HslU are essential for unfolding of protein substrates subsequently hydrolyzed by HslV. HslU recognizes the N-terminal part of its protein substrates and unfolds these before they are guided to HslV for hydrolysis. This is ATP-dependent protease ATPase subunit HslU from Brucella melitensis biotype 1 (strain ATCC 23456 / CCUG 17765 / NCTC 10094 / 16M).